The primary structure comprises 139 residues: Cell division protein SepF (139 aa).

The protein belongs to the SepF family. In terms of assembly, homodimer. Interacts with FtsZ.

The protein localises to the cytoplasm. Cell division protein that is part of the divisome complex and is recruited early to the Z-ring. Probably stimulates Z-ring formation, perhaps through the cross-linking of FtsZ protofilaments. Its function overlaps with FtsA. The protein is Cell division protein SepF of Coprothermobacter proteolyticus (strain ATCC 35245 / DSM 5265 / OCM 4 / BT).